The primary structure comprises 281 residues: Bifunctional protein FolD (281 aa).

NADP(+)-binding positions include 164–166 and S189; that span reads GRS.

It belongs to the tetrahydrofolate dehydrogenase/cyclohydrolase family. In terms of assembly, homodimer.

It carries out the reaction (6R)-5,10-methylene-5,6,7,8-tetrahydrofolate + NADP(+) = (6R)-5,10-methenyltetrahydrofolate + NADPH. The enzyme catalyses (6R)-5,10-methenyltetrahydrofolate + H2O = (6R)-10-formyltetrahydrofolate + H(+). It participates in one-carbon metabolism; tetrahydrofolate interconversion. In terms of biological role, catalyzes the oxidation of 5,10-methylenetetrahydrofolate to 5,10-methenyltetrahydrofolate and then the hydrolysis of 5,10-methenyltetrahydrofolate to 10-formyltetrahydrofolate. The protein is Bifunctional protein FolD of Enterococcus faecalis (strain ATCC 700802 / V583).